The chain runs to 352 residues: Heat-inducible transcription repressor HrcA (352 aa).

This sequence belongs to the HrcA family.

Its function is as follows. Negative regulator of class I heat shock genes (grpE-dnaK-dnaJ and groELS operons). Prevents heat-shock induction of these operons. The polypeptide is Heat-inducible transcription repressor HrcA (Prochlorococcus marinus (strain MIT 9313)).